The primary structure comprises 602 residues: Threonine--tRNA ligase (602 aa).

Residues 208 to 499 (DHRKLGIELK…LTEHCAGEFP (292 aa)) form a catalytic region. Residues Cys-300, His-351, and His-476 each contribute to the Zn(2+) site.

Belongs to the class-II aminoacyl-tRNA synthetase family. As to quaternary structure, homodimer. Zn(2+) serves as cofactor.

Its subcellular location is the cytoplasm. The enzyme catalyses tRNA(Thr) + L-threonine + ATP = L-threonyl-tRNA(Thr) + AMP + diphosphate + H(+). Functionally, catalyzes the attachment of threonine to tRNA(Thr) in a two-step reaction: L-threonine is first activated by ATP to form Thr-AMP and then transferred to the acceptor end of tRNA(Thr). Also edits incorrectly charged L-seryl-tRNA(Thr). This Campylobacter jejuni subsp. doylei (strain ATCC BAA-1458 / RM4099 / 269.97) protein is Threonine--tRNA ligase.